The primary structure comprises 28 residues: GVFCGEACAQASCSIAGCECIAGLCYKN.

3 cysteine pairs are disulfide-bonded: C4–C18, C8–C20, and C13–C25.

In terms of processing, this is a cyclic peptide. Post-translationally, contains 3 disulfide bonds.

In terms of biological role, probably participates in a plant defense mechanism. The chain is Cyclotide vodo I1 from Viola odorata (Sweet violet).